Consider the following 532-residue polypeptide: Methionine--tRNA ligase (532 aa).

A 'HIGH' region motif is present at residues 16–26 (YYVNDVPHLGS). Residues C131, C134, C149, and H152 each contribute to the Zn(2+) site. The short motif at 305 to 309 (KMGKS) is the 'KMSKS' region element. An ATP-binding site is contributed by K308.

This sequence belongs to the class-I aminoacyl-tRNA synthetase family. MetG type 2A subfamily. In terms of assembly, monomer. Zn(2+) serves as cofactor.

Its subcellular location is the cytoplasm. The enzyme catalyses tRNA(Met) + L-methionine + ATP = L-methionyl-tRNA(Met) + AMP + diphosphate. Its function is as follows. Is required not only for elongation of protein synthesis but also for the initiation of all mRNA translation through initiator tRNA(fMet) aminoacylation. The sequence is that of Methionine--tRNA ligase (metG) from Synechocystis sp. (strain ATCC 27184 / PCC 6803 / Kazusa).